A 76-amino-acid chain; its full sequence is Translational regulator CsrA (76 aa).

The protein belongs to the CsrA/RsmA family. In terms of assembly, homodimer; the beta-strands of each monomer intercalate to form a hydrophobic core, while the alpha-helices form wings that extend away from the core.

The protein resides in the cytoplasm. Its function is as follows. A translational regulator that binds mRNA to regulate translation initiation and/or mRNA stability. Usually binds in the 5'-UTR at or near the Shine-Dalgarno sequence preventing ribosome-binding, thus repressing translation. Its main target seems to be the major flagellin gene, while its function is anatagonized by FliW. The chain is Translational regulator CsrA from Helicobacter pylori (strain J99 / ATCC 700824) (Campylobacter pylori J99).